The sequence spans 230 residues: Cytochrome c oxidase subunit 2 (230 aa).

The Mitochondrial intermembrane segment spans residues 1–14 (MAHPTQLGFQDAAS). A helical membrane pass occupies residues 15–45 (PVMEELLHFHDHALMIVFLISALVLYVIITT). Residues 46–59 (VSTKLTNMYILDSQ) lie on the Mitochondrial matrix side of the membrane. Residues 60–87 (EIEIVWTVLPALILILIALPSLRILYLM) form a helical membrane-spanning segment. The Mitochondrial intermembrane portion of the chain corresponds to 88–230 (DEINDPHLTI…NWSTLMLKDA (143 aa)). Positions 161, 196, 198, 200, 204, and 207 each coordinate Cu cation. Glutamate 198 provides a ligand contact to Mg(2+).

The protein belongs to the cytochrome c oxidase subunit 2 family. As to quaternary structure, component of the cytochrome c oxidase (complex IV, CIV), a multisubunit enzyme composed of 14 subunits. The complex is composed of a catalytic core of 3 subunits MT-CO1, MT-CO2 and MT-CO3, encoded in the mitochondrial DNA, and 11 supernumerary subunits COX4I, COX5A, COX5B, COX6A, COX6B, COX6C, COX7A, COX7B, COX7C, COX8 and NDUFA4, which are encoded in the nuclear genome. The complex exists as a monomer or a dimer and forms supercomplexes (SCs) in the inner mitochondrial membrane with NADH-ubiquinone oxidoreductase (complex I, CI) and ubiquinol-cytochrome c oxidoreductase (cytochrome b-c1 complex, complex III, CIII), resulting in different assemblies (supercomplex SCI(1)III(2)IV(1) and megacomplex MCI(2)III(2)IV(2)). Found in a complex with TMEM177, COA6, COX18, COX20, SCO1 and SCO2. Interacts with TMEM177 in a COX20-dependent manner. Interacts with COX20. Interacts with COX16. It depends on Cu cation as a cofactor.

Its subcellular location is the mitochondrion inner membrane. It catalyses the reaction 4 Fe(II)-[cytochrome c] + O2 + 8 H(+)(in) = 4 Fe(III)-[cytochrome c] + 2 H2O + 4 H(+)(out). Functionally, component of the cytochrome c oxidase, the last enzyme in the mitochondrial electron transport chain which drives oxidative phosphorylation. The respiratory chain contains 3 multisubunit complexes succinate dehydrogenase (complex II, CII), ubiquinol-cytochrome c oxidoreductase (cytochrome b-c1 complex, complex III, CIII) and cytochrome c oxidase (complex IV, CIV), that cooperate to transfer electrons derived from NADH and succinate to molecular oxygen, creating an electrochemical gradient over the inner membrane that drives transmembrane transport and the ATP synthase. Cytochrome c oxidase is the component of the respiratory chain that catalyzes the reduction of oxygen to water. Electrons originating from reduced cytochrome c in the intermembrane space (IMS) are transferred via the dinuclear copper A center (CU(A)) of subunit 2 and heme A of subunit 1 to the active site in subunit 1, a binuclear center (BNC) formed by heme A3 and copper B (CU(B)). The BNC reduces molecular oxygen to 2 water molecules using 4 electrons from cytochrome c in the IMS and 4 protons from the mitochondrial matrix. The protein is Cytochrome c oxidase subunit 2 (mt-co2) of Formosania lacustris (Oriental stream loach).